Here is a 369-residue protein sequence, read N- to C-terminus: uncharacterized protein (369 aa).

Helical transmembrane passes span 25 to 45 (QWVI…TVHW), 47 to 67 (FGLL…LMPE), 119 to 139 (LNIV…FGVM), 152 to 172 (ITGF…FSAL), 206 to 226 (GALH…LFAI), 235 to 255 (LQAV…TLHL), 268 to 288 (LLFT…LPLI), 295 to 315 (LVGF…TTVF), and 323 to 343 (WVFY…GTVF).

The protein to B.subtilis ComEC.

Its subcellular location is the cell membrane. This is an uncharacterized protein from Mycoplasma pneumoniae (strain ATCC 29342 / M129 / Subtype 1) (Mycoplasmoides pneumoniae).